Here is a 705-residue protein sequence, read N- to C-terminus: Ion-translocating oxidoreductase complex subunit C (705 aa).

4Fe-4S ferredoxin-type domains lie at 368 to 397 and 407 to 435; these read MGET…QQLY and KATA…LVQY. 8 residues coordinate [4Fe-4S] cluster: cysteine 377, cysteine 380, cysteine 383, cysteine 387, cysteine 416, cysteine 419, cysteine 422, and cysteine 426. Residues 536-684 are disordered; it reads RARQAENIPA…EPVDPRKAAV (149 aa).

Belongs to the 4Fe4S bacterial-type ferredoxin family. RnfC subfamily. As to quaternary structure, the complex is composed of six subunits: RnfA, RnfB, RnfC, RnfD, RnfE and RnfG. [4Fe-4S] cluster serves as cofactor.

The protein resides in the cell inner membrane. Functionally, part of a membrane-bound complex that couples electron transfer with translocation of ions across the membrane. The protein is Ion-translocating oxidoreductase complex subunit C of Citrobacter koseri (strain ATCC BAA-895 / CDC 4225-83 / SGSC4696).